The chain runs to 205 residues: Methylthioribulose-1-phosphate dehydratase (205 aa).

Positions 96 and 98 each coordinate Zn(2+).

The protein belongs to the aldolase class II family. MtnB subfamily. The cofactor is Zn(2+).

The catalysed reaction is 5-(methylsulfanyl)-D-ribulose 1-phosphate = 5-methylsulfanyl-2,3-dioxopentyl phosphate + H2O. Its pathway is amino-acid biosynthesis; L-methionine biosynthesis via salvage pathway; L-methionine from S-methyl-5-thio-alpha-D-ribose 1-phosphate: step 2/6. Functionally, catalyzes the dehydration of methylthioribulose-1-phosphate (MTRu-1-P) into 2,3-diketo-5-methylthiopentyl-1-phosphate (DK-MTP-1-P). The protein is Methylthioribulose-1-phosphate dehydratase of Pseudomonas aeruginosa (strain UCBPP-PA14).